Reading from the N-terminus, the 323-residue chain is Olfactory receptor 4K5 (323 aa).

At 1–25 (MDKSNSSVVSEFVLLGLCSSQKLQL) the chain is on the extracellular side. Asn-5 carries N-linked (GlcNAc...) asparagine glycosylation. A helical transmembrane segment spans residues 26–49 (FYFCFFSVLYTVIVLGNLLIILTV). Residues 50 to 57 (TSDTSLHS) are Cytoplasmic-facing. Residues 58-79 (PMYFLLGNLSFVDICQASFATP) form a helical membrane-spanning segment. Residues 80–100 (KMIADFLSAHETISFSGCIAQ) lie on the Extracellular side of the membrane. The cysteines at positions 97 and 189 are disulfide-linked. A helical membrane pass occupies residues 101–120 (IFFIHLFTGGEMVLLVSMAY). Residues 121 to 139 (DRYVAICKPLYYVVIMSRR) lie on the Cytoplasmic side of the membrane. The helical transmembrane segment at 140–158 (TCTVLVMISWAVSLVHTLS) threads the bilayer. The Extracellular segment spans residues 159-195 (QLSFTVNLPFCGPNVVDSFFCDLPRVTKLACLDSYII). The helical transmembrane segment at 196–219 (EILIVVNSGILSLSTFSLLVSSYI) threads the bilayer. Residues 220–235 (IILVTVWLKSSAAMAK) lie on the Cytoplasmic side of the membrane. A helical membrane pass occupies residues 236–258 (AFSTLASHIAVVILFFGPCIFIY). Residues 259-269 (VWPFTISPLDK) are Extracellular-facing. A helical membrane pass occupies residues 270–289 (FLAIFYTVFTPVLNPIIYTL). Over 290 to 323 (RNRDMKAAVRKIVNHYLRPRRISEMSLVVRTSFH) the chain is Cytoplasmic.

Belongs to the G-protein coupled receptor 1 family.

It is found in the cell membrane. Functionally, odorant receptor. The chain is Olfactory receptor 4K5 (OR4K5) from Homo sapiens (Human).